A 101-amino-acid chain; its full sequence is uncharacterized protein (101 aa).

The helical transmembrane segment at 17–37 threads the bilayer; the sequence is VIKILLISGISRIIILILAMF.

It is found in the endoplasmic reticulum membrane. This is an uncharacterized protein from Schizosaccharomyces pombe (strain 972 / ATCC 24843) (Fission yeast).